Here is a 297-residue protein sequence, read N- to C-terminus: Polyhedral envelope protein (297 aa).

This sequence belongs to the baculoviridae PE family.

It is found in the virion membrane. In terms of biological role, major component of the polyhedra envelope. The chain is Polyhedral envelope protein from Orgyia pseudotsugata (Douglas-fir tussock moth).